Reading from the N-terminus, the 642-residue chain is Threonine--tRNA ligase (642 aa).

Positions 1–61 (MPVITLPDGS…DTDSELSIIT (61 aa)) constitute a TGS domain. A catalytic region spans residues 243–534 (DHRKIGKQLD…LIEEYAGKFP (292 aa)). Zn(2+)-binding residues include Cys-334, His-385, and His-511.

The protein belongs to the class-II aminoacyl-tRNA synthetase family. As to quaternary structure, homodimer. Requires Zn(2+) as cofactor.

It is found in the cytoplasm. It catalyses the reaction tRNA(Thr) + L-threonine + ATP = L-threonyl-tRNA(Thr) + AMP + diphosphate + H(+). Catalyzes the attachment of threonine to tRNA(Thr) in a two-step reaction: L-threonine is first activated by ATP to form Thr-AMP and then transferred to the acceptor end of tRNA(Thr). Also edits incorrectly charged L-seryl-tRNA(Thr). This chain is Threonine--tRNA ligase, found in Shewanella sediminis (strain HAW-EB3).